We begin with the raw amino-acid sequence, 617 residues long: Probable translation initiation factor IF-2 (617 aa).

The tr-type G domain occupies 14 to 231 (LRQPIVVVLG…VLAGLTQTYL (218 aa)). The tract at residues 23–30 (GHVDHGKT) is G1. Residue 23 to 30 (GHVDHGKT) participates in GTP binding. The tract at residues 48 to 52 (GITQH) is G2. The segment at 87–90 (DTPG) is G3. GTP is bound by residues 87-91 (DTPGH) and 141-144 (NKID). Positions 141–144 (NKID) are G4. The interval 209 to 211 (SAR) is G5.

This sequence belongs to the TRAFAC class translation factor GTPase superfamily. Classic translation factor GTPase family. IF-2 subfamily.

Its function is as follows. Function in general translation initiation by promoting the binding of the formylmethionine-tRNA to ribosomes. Seems to function along with eIF-2. This Aeropyrum pernix (strain ATCC 700893 / DSM 11879 / JCM 9820 / NBRC 100138 / K1) protein is Probable translation initiation factor IF-2 (infB).